A 380-amino-acid polypeptide reads, in one-letter code: Queuine tRNA-ribosyltransferase (380 aa).

Asp-96 serves as the catalytic Proton acceptor. Substrate contacts are provided by residues 96–100 (DSGGF), Asp-150, Gln-193, and Gly-220. The interval 251 to 257 (GVGAPDS) is RNA binding. The active-site Nucleophile is Asp-270. The segment at 275–279 (TRIAR) is RNA binding; important for wobble base 34 recognition. Residues Cys-308, Cys-310, Cys-313, and His-339 each contribute to the Zn(2+) site.

This sequence belongs to the queuine tRNA-ribosyltransferase family. In terms of assembly, homodimer. Within each dimer, one monomer is responsible for RNA recognition and catalysis, while the other monomer binds to the replacement base PreQ1. Requires Zn(2+) as cofactor.

It catalyses the reaction 7-aminomethyl-7-carbaguanine + guanosine(34) in tRNA = 7-aminomethyl-7-carbaguanosine(34) in tRNA + guanine. Its pathway is tRNA modification; tRNA-queuosine biosynthesis. Its function is as follows. Catalyzes the base-exchange of a guanine (G) residue with the queuine precursor 7-aminomethyl-7-deazaguanine (PreQ1) at position 34 (anticodon wobble position) in tRNAs with GU(N) anticodons (tRNA-Asp, -Asn, -His and -Tyr). Catalysis occurs through a double-displacement mechanism. The nucleophile active site attacks the C1' of nucleotide 34 to detach the guanine base from the RNA, forming a covalent enzyme-RNA intermediate. The proton acceptor active site deprotonates the incoming PreQ1, allowing a nucleophilic attack on the C1' of the ribose to form the product. After dissociation, two additional enzymatic reactions on the tRNA convert PreQ1 to queuine (Q), resulting in the hypermodified nucleoside queuosine (7-(((4,5-cis-dihydroxy-2-cyclopenten-1-yl)amino)methyl)-7-deazaguanosine). The chain is Queuine tRNA-ribosyltransferase from Streptococcus pneumoniae (strain P1031).